A 180-amino-acid chain; its full sequence is Photosystem II extrinsic protein V (180 aa).

Positions 1–40 (MFSKAFSFQKVFAPARRRLLVLLLAALMAGFGWGLAPVFA) are cleaved as a signal peptide. Positions 73, 76, 77, and 128 each coordinate heme c.

Belongs to the cytochrome c family. PsbV subfamily. In terms of assembly, PSII is composed of 1 copy each of membrane proteins PsbA, PsbB, PsbC, PsbD, PsbE, PsbF, PsbH, PsbI, PsbJ, PsbK, PsbL, PsbM, PsbT, PsbX, PsbY, PsbZ, Psb30/Ycf12, peripheral proteins PsbO, CyanoQ (PsbQ), PsbU, PsbV and a large number of cofactors. It forms dimeric complexes. Requires heme c as cofactor.

Its subcellular location is the cellular thylakoid membrane. Functionally, one of the extrinsic, lumenal subunits of photosystem II (PSII). PSII is a light-driven water plastoquinone oxidoreductase, using light energy to abstract electrons from H(2)O, generating a proton gradient subsequently used for ATP formation. The extrinsic proteins stabilize the structure of photosystem II oxygen-evolving complex (OEC), the ion environment of oxygen evolution and protect the OEC against heat-induced inactivation. Low-potential cytochrome c that plays a role in the OEC of PSII. This Synechococcus sp. (strain JA-2-3B'a(2-13)) (Cyanobacteria bacterium Yellowstone B-Prime) protein is Photosystem II extrinsic protein V.